We begin with the raw amino-acid sequence, 195 residues long: MESSQGRRRRPGTVVPGEAAETDSELSASSSEEELYLGPSGPTRGRPTGLRVAGEAAETDSEPEPEPTVVPVDLPPLVVQRDPAETWGTEETPAMAPARSLLQLRLAESQTRLDHDVAAAVSGVYRRAGRDVAALAGRLAAAQATGLAAAHSVRLARGDLCALAERLDIVAGCRLLPDIRGVPGMEPEQDPGPRA.

The segment covering 1-11 has biased composition (basic residues); sequence MESSQGRRRRP. Residues 1-72 form a disordered region; sequence MESSQGRRRR…PEPEPTVVPV (72 aa). Residues 25 to 51 are compositionally biased toward low complexity; the sequence is ELSASSSEEELYLGPSGPTRGRPTGLR. Threonine 59 carries the phosphothreonine modification. The residue at position 61 (serine 61) is a Phosphoserine.

This sequence belongs to the BLOC1S3 family. Octamer composed of one copy each BLOC1S1, BLOC1S2, BLOC1S3, BLOC1S4, BLOC1S5, BLOC1S6, DTNBP1/BLOC1S7 and SNAPIN/BLOC1S8. Interacts directly with BLOC1S2. Component of the biogenesis of lysosome-related organelles complex 1 (BLOC-1) composed of BLOC1S1, BLOC1S2, BLOC1S3, BLOC1S4, BLOC1S5, BLOC1S6, DTNBP1/BLOC1S7 and SNAPIN/BLOC1S8. The BLOC-1 complex associates with the AP-3 protein complex and membrane protein cargos. Interacts with BLOC1S4, BLOC1S5 and BLOC1S6. Post-translationally, phosphorylated. Ubiquitously expressed.

The protein localises to the cytoplasm. Its function is as follows. Component of the BLOC-1 complex, a complex that is required for normal biogenesis of lysosome-related organelles (LRO), such as platelet dense granules and melanosomes. In concert with the AP-3 complex, the BLOC-1 complex is required to target membrane protein cargos into vesicles assembled at cell bodies for delivery into neurites and nerve terminals. The BLOC-1 complex, in association with SNARE proteins, is also proposed to be involved in neurite extension. Plays a role in intracellular vesicle trafficking. In Mus musculus (Mouse), this protein is Biogenesis of lysosome-related organelles complex 1 subunit 3 (Bloc1s3).